Reading from the N-terminus, the 942-residue chain is DNA mismatch repair protein MSH2 (942 aa).

ATP is bound at residue 667 to 674 (GPNMGGKS).

It belongs to the DNA mismatch repair MutS family. Heterodimer of MSH2 and MSH6 (GTBP).

The protein resides in the nucleus. Its function is as follows. Involved in postreplication mismatch repair. Binds specifically to DNA containing mismatched nucleotides thus providing a target for the excision repair processes characteristic of postreplication mismatch repair. The chain is DNA mismatch repair protein MSH2 (MUS1) from Zea mays (Maize).